The primary structure comprises 1548 residues: Lysine-specific demethylase 5D (1548 aa).

Positions 14–55 (CPVFEPSWAEFRDPLGYIAKIRPIAEKSGICKIRPPADWQPP) constitute a JmjN domain. An ARID domain is found at 79 to 169 (TRVKLNYLDQ…IIYPYEIFQS (91 aa)). Glycyl lysine isopeptide (Lys-Gly) (interchain with G-Cter in SUMO2) cross-links involve residues Lys-205, Lys-229, Lys-244, and Lys-279. Positions 208-229 (CYSRRGKRLQPEPEPTEEDIEK) are disordered. Phosphoserine occurs at positions 300 and 316. The segment at 325–371 (VCRICSRGDEVDKFLLCDGCSDNYHIFCLLPPLSEVPKGVWRCPKCI) adopts a PHD-type 1 zinc-finger fold. A 2-oxoglutarate-binding site is contributed by Tyr-439. Residues 467–633 (EYAACGWNLN…VGRQCIEHYR (167 aa)) form the JmjC domain. His-513 and Glu-515 together coordinate Fe cation. 2-oxoglutarate contacts are provided by Ser-521, Asn-523, and Lys-531. His-601 provides a ligand contact to Fe cation. The C5HC2 zinc finger occupies 706–758 (CIKCKTTCFLSALACYDCPDSLVCLSHINDLCKCSRNRQYLRYRYTLDELPAM). Phosphoserine occurs at positions 889 and 893. Lys-1123 participates in a covalent cross-link: Glycyl lysine isopeptide (Lys-Gly) (interchain with G-Cter in SUMO2). A PHD-type 2 zinc finger spans residues 1182-1243 (ICICGQVCAG…DTKFLCPLCM (62 aa)). Ser-1355 bears the Phosphoserine mark. A disordered region spans residues 1438–1468 (KPENPGNWSEEQTPERRRQRRQKVVLSRKGE).

The protein belongs to the JARID1 histone demethylase family. In terms of assembly, interacts withPCGF6, MSH5, ZMYND8, AR. L-ascorbate is required as a cofactor. It depends on Fe(2+) as a cofactor.

Its subcellular location is the nucleus. It carries out the reaction N(6),N(6),N(6)-trimethyl-L-lysyl(4)-[histone H3] + 3 2-oxoglutarate + 3 O2 = L-lysyl(4)-[histone H3] + 3 formaldehyde + 3 succinate + 3 CO2. Functionally, histone demethylase that specifically demethylates 'Lys-4' of histone H3, thereby playing a central role in histone code. Does not demethylate histone H3 'Lys-9', H3 'Lys-27', H3 'Lys-36', H3 'Lys-79' or H4 'Lys-20'. Demethylates trimethylated and dimethylated but not monomethylated H3 'Lys-4'. May play a role in spermatogenesis. Involved in transcriptional repression of diverse metastasis-associated genes; in this function seems to cooperate with ZMYND8. Suppresses prostate cancer cell invasion. Regulates androgen receptor (AR) transcriptional activity by demethylating H3K4me3 active transcription marks. This is Lysine-specific demethylase 5D (Kdm5d) from Mus musculus (Mouse).